The primary structure comprises 468 residues: ATP synthase subunit beta (468 aa).

155 to 162 (GGAGVGKT) is an ATP binding site.

The protein belongs to the ATPase alpha/beta chains family. In terms of assembly, F-type ATPases have 2 components, CF(1) - the catalytic core - and CF(0) - the membrane proton channel. CF(1) has five subunits: alpha(3), beta(3), gamma(1), delta(1), epsilon(1). CF(0) has three main subunits: a(1), b(2) and c(9-12). The alpha and beta chains form an alternating ring which encloses part of the gamma chain. CF(1) is attached to CF(0) by a central stalk formed by the gamma and epsilon chains, while a peripheral stalk is formed by the delta and b chains.

The protein resides in the cell membrane. The catalysed reaction is ATP + H2O + 4 H(+)(in) = ADP + phosphate + 5 H(+)(out). Functionally, produces ATP from ADP in the presence of a proton gradient across the membrane. The catalytic sites are hosted primarily by the beta subunits. This is ATP synthase subunit beta from Streptococcus pyogenes serotype M5 (strain Manfredo).